Here is a 220-residue protein sequence, read N- to C-terminus: Large ribosomal subunit protein uL3 (220 aa).

It belongs to the universal ribosomal protein uL3 family. In terms of assembly, part of the 50S ribosomal subunit. Forms a cluster with proteins L14 and L19.

Its function is as follows. One of the primary rRNA binding proteins, it binds directly near the 3'-end of the 23S rRNA, where it nucleates assembly of the 50S subunit. The protein is Large ribosomal subunit protein uL3 of Staphylococcus carnosus (strain TM300).